We begin with the raw amino-acid sequence, 410 residues long: MQTTTALRLYGKRDLRLETFTLPAMQDDEILARVVTDSLCLSSWKEANQGADHKKVPDDVATRPIIIGHEFCGEILAVGKKWQHKFQPGQRYVIQANLQLPDRPDCPGYSFPWIGGEATHVVIPNEVMAQDCLLTWEGDTWFEGSLVEPLSCVIGAFNANYHLQEGSYNHVMGIRPQGHTLILGGTGPMGLLAIDYALHGPINPSLLVVTDTNKPKLSYARRHYPSEPQTLIHYLDGHEASRDTLLALSGGHGFDDIFVFVPNEQLITLASSLLAPDGCLNFFAGPQDKQFSAPINFYDVHYAFTHYVGTSGGNTDDMRAAVALMQAKKVQTAKVVTHILGLNAAGETTLDLPAVGGGKKLVYTGKAFPLTPLGEIADPELAAIVARHHGIWSQEAEAYLLAHAEDITHD.

Zn(2+) contacts are provided by cysteine 40, histidine 69, and glutamate 70. NAD(+)-binding positions include arginine 221 and 309 to 310; that span reads GT.

The protein belongs to the zinc-containing alcohol dehydrogenase family. The cofactor is Zn(2+).

In terms of biological role, reduces L-sorbose 1-phosphate to D-glucitol 6-phosphate. This chain is L-sorbose 1-phosphate reductase (sorE), found in Klebsiella pneumoniae.